Reading from the N-terminus, the 176-residue chain is ATP-dependent protease subunit HslV (176 aa).

Threonine 6 is an active-site residue. Glycine 161, cysteine 164, and threonine 167 together coordinate Na(+).

It belongs to the peptidase T1B family. HslV subfamily. A double ring-shaped homohexamer of HslV is capped on each side by a ring-shaped HslU homohexamer. The assembly of the HslU/HslV complex is dependent on binding of ATP.

It localises to the cytoplasm. It carries out the reaction ATP-dependent cleavage of peptide bonds with broad specificity.. Allosterically activated by HslU binding. Its function is as follows. Protease subunit of a proteasome-like degradation complex believed to be a general protein degrading machinery. This is ATP-dependent protease subunit HslV from Thermotoga sp. (strain RQ2).